Consider the following 515-residue polypeptide: FADH(2)-dependent monooxygenase TftD (515 aa).

100–104 (RLPDA) contributes to the substrate binding site. FAD contacts are provided by residues 151 to 153 (LNF), 157 to 160 (QTDR), and threonine 192. 203 to 204 (GC) contacts substrate. Position 457–460 (457–460 (TMTR)) interacts with FAD.

It belongs to the FADH(2)-utilizing monooxygenase family. In terms of assembly, homotetramer. The chlorophenol-4-monooxygenase is composed of an oxygenase component TftD and a reductase component TftC.

Its pathway is xenobiotic degradation. Its function is as follows. Oxygenase component of a two-component system that degrades 2,4,5-trichlorophenol. Uses FADH(2) supplied by TftC to oxidize 2,4,5-trichlorophenol (2,4,5-TCP) to 2,5-dichloro-p-benzoquinone, which is chemically reduced to 2,5-dichloro-p-hydroquinone (2,5-DiCHQ). Then, TftD oxidizes the latter to 5-chloro-2-hydroxy-p-benzoquinone. The polypeptide is FADH(2)-dependent monooxygenase TftD (tftD) (Burkholderia cepacia (Pseudomonas cepacia)).